The primary structure comprises 475 residues: Ribulose bisphosphate carboxylase large chain (475 aa).

Positions 1 to 2 (MS) are excised as a propeptide. An N-acetylproline modification is found at proline 3. Lysine 14 carries the post-translational modification N6,N6,N6-trimethyllysine. The substrate site is built by asparagine 123 and threonine 173. The active-site Proton acceptor is the lysine 175. Lysine 177 is a binding site for substrate. Mg(2+) is bound by residues lysine 201, aspartate 203, and glutamate 204. Lysine 201 carries the N6-carboxylysine modification. Residue histidine 294 is the Proton acceptor of the active site. Residues arginine 295, histidine 327, and serine 379 each contribute to the substrate site.

It belongs to the RuBisCO large chain family. Type I subfamily. Heterohexadecamer of 8 large chains and 8 small chains; disulfide-linked. The disulfide link is formed within the large subunit homodimers. The cofactor is Mg(2+). The disulfide bond which can form in the large chain dimeric partners within the hexadecamer appears to be associated with oxidative stress and protein turnover.

It is found in the plastid. The protein resides in the chloroplast. The catalysed reaction is 2 (2R)-3-phosphoglycerate + 2 H(+) = D-ribulose 1,5-bisphosphate + CO2 + H2O. It carries out the reaction D-ribulose 1,5-bisphosphate + O2 = 2-phosphoglycolate + (2R)-3-phosphoglycerate + 2 H(+). In terms of biological role, ruBisCO catalyzes two reactions: the carboxylation of D-ribulose 1,5-bisphosphate, the primary event in carbon dioxide fixation, as well as the oxidative fragmentation of the pentose substrate in the photorespiration process. Both reactions occur simultaneously and in competition at the same active site. The polypeptide is Ribulose bisphosphate carboxylase large chain (Carpinus caroliniana (American hornbeam)).